Here is a 354-residue protein sequence, read N- to C-terminus: Homer protein homolog 2 (354 aa).

A WH1 domain is found at 1-110 (MGEQPIFTTR…EKFQEVKEAA (110 aa)). The stretch at 92–122 (SEQQLTKFAEKFQEVKEAAKIAKDKTQEKIE) forms a coiled coil. The span at 112–122 (IAKDKTQEKIE) shows a compositional bias: basic and acidic residues. A disordered region spans residues 112-166 (IAKDKTQEKIETSSNHSQESGRETPSSTQASSVNGTDDEKASHAGPANTHLKSEN). The segment covering 123–146 (TSSNHSQESGRETPSSTQASSVNG) has biased composition (polar residues). Residues 160–329 (THLKSENDKL…RHLKVELKSF (170 aa)) are a coiled coil.

This sequence belongs to the Homer family. As to quaternary structure, forms coiled-coil structures that mediate homo- and heteromultimerization. Interacts with NFATC2; interaction is reduced by AKT activation. Interacts with NFATC1 and NFATC4. Interacts with DAGLA (via PPXXF motif); this interaction is required for the cell membrane localization of DAGLA.

It localises to the cytoplasm. It is found in the cell membrane. The protein localises to the postsynaptic density. Its subcellular location is the synapse. The protein resides in the cell projection. It localises to the stereocilium. In terms of biological role, postsynaptic density scaffolding protein. Binds and cross-links cytoplasmic regions of GRM1, GRM5, ITPR1, DNM3, RYR1, RYR2, SHANK1 and SHANK3. By physically linking GRM1 and GRM5 with ER-associated ITPR1 receptors, it aids the coupling of surface receptors to intracellular calcium release. May also couple GRM1 to PI3 kinase through its interaction with AGAP2. Isoforms can be differently regulated and may play an important role in maintaining the plasticity at glutamatergic synapses. Required for normal hearing. Negatively regulates T cell activation by inhibiting the calcineurin-NFAT pathway. Acts by competing with calcineurin/PPP3CA for NFAT protein binding, hence preventing NFAT activation by PPP3CA. The sequence is that of Homer protein homolog 2 from Homo sapiens (Human).